The primary structure comprises 294 residues: 4-hydroxy-tetrahydrodipicolinate synthase (294 aa).

Position 46 (T46) interacts with pyruvate. Catalysis depends on Y134, which acts as the Proton donor/acceptor. K163 functions as the Schiff-base intermediate with substrate in the catalytic mechanism. I205 provides a ligand contact to pyruvate.

It belongs to the DapA family. As to quaternary structure, homotetramer; dimer of dimers.

It localises to the cytoplasm. It catalyses the reaction L-aspartate 4-semialdehyde + pyruvate = (2S,4S)-4-hydroxy-2,3,4,5-tetrahydrodipicolinate + H2O + H(+). Its pathway is amino-acid biosynthesis; L-lysine biosynthesis via DAP pathway; (S)-tetrahydrodipicolinate from L-aspartate: step 3/4. In terms of biological role, catalyzes the condensation of (S)-aspartate-beta-semialdehyde [(S)-ASA] and pyruvate to 4-hydroxy-tetrahydrodipicolinate (HTPA). This Clostridium tetani (strain Massachusetts / E88) protein is 4-hydroxy-tetrahydrodipicolinate synthase.